We begin with the raw amino-acid sequence, 344 residues long: uncharacterized protein (344 aa).

The signal sequence occupies residues 1–19 (MRIIFYLTLLLFIFNKVKS). The propeptide at 323 to 344 (SATRNQISIMVLILSVLLVLIL) is removed in mature form.

Its subcellular location is the cell membrane. This is an uncharacterized protein from Dictyostelium discoideum (Social amoeba).